Reading from the N-terminus, the 194-residue chain is Fatty acid metabolism regulator protein (194 aa).

Residues Arg5–Phe65 form the HTH tetR-type domain. The segment at residues Gln28–Phe47 is a DNA-binding region (H-T-H motif).

As to quaternary structure, homodimer. Binds to DNA.

It is found in the cytoplasm. Functionally, transcriptional regulator in fatty acid degradation. Represses transcription of genes required for fatty acid transport and beta-oxidation, including acdA, fadA, fadB, fadE, fadF, fadG, fadH, fadM, fadN, lcfA and lcfB. Binding of FadR to DNA is specifically inhibited by long chain fatty acyl-CoA compounds of 14-20 carbon atoms in length. This chain is Fatty acid metabolism regulator protein (fadR), found in Bacillus subtilis (strain 168).